A 163-amino-acid polypeptide reads, in one-letter code: Periplasmic nitrate reductase, electron transfer subunit (163 aa).

Positions 1-32 (MRSQDPSRRLSRRLWTLFALALCLVTGTVALA) are cleaved as a signal peptide. Positions 76, 90, 93, 94, 111, 130, 133, and 134 each coordinate heme c.

Belongs to the NapB family. As to quaternary structure, component of the periplasmic nitrate reductase NapAB complex composed of NapA and NapB. Binds 2 heme C groups per subunit.

It localises to the periplasm. Functionally, electron transfer subunit of the periplasmic nitrate reductase complex NapAB. Receives electrons from the membrane-anchored tetraheme c-type NapC protein and transfers these to NapA subunit, thus allowing electron flow between membrane and periplasm. Essential for periplasmic nitrate reduction with nitrate as the terminal electron acceptor. This is Periplasmic nitrate reductase, electron transfer subunit from Neorhizobium galegae (Rhizobium galegae).